A 455-amino-acid polypeptide reads, in one-letter code: Differentiation-associated protein 1 (455 aa).

The signal sequence occupies residues 1 to 21 (MKFKLFLLVFFVFLLPYLSQS). The segment at 349 to 434 (IGSSSSSSSS…SDDDLGNPSS (86 aa)) is disordered. Residues 351 to 423 (SSSSSSSSSS…KSNHTSSESS (73 aa)) are compositionally biased toward low complexity. S433 carries the GPI-like-anchor amidated serine lipid modification. The propeptide at 434 to 455 (SSSILSVSKLIILLISIILYCF) is removed in mature form.

Its subcellular location is the cell membrane. Its function is as follows. Plays a role in differentiation. This chain is Differentiation-associated protein 1 (dia1), found in Dictyostelium discoideum (Social amoeba).